We begin with the raw amino-acid sequence, 418 residues long: MFKDISIKDFDPVLAKAMAAESVRQENHIELIASENYCSQAVMEAQGTDLTNKYAEGYPGKRYYGGCEHVDVVEQLAIDRAKELFGAEYVNVQPHSGSQANSAVFLALLEANDTVLGMSLDAGGHLTHGAHINFSGLNYNAVQYGLVEGTGLIDYDQVESLAKEHKPKMIIAGFSAYSQVVDWARFREIADEVGAYLLVDMAHVAGLIAGGVYPSPVPFADVVTTTTHKTLRGPRSGMILARDEKLAKKLNSAVFPGNQGGPLMHVIAAKAICFKEALENNFKTYQQQVVKNAQAMAKVIQERGYEIISGGTENHLMLISLVKQEMTGKEADKWLGDAHITVNKNAVPNDPKSPFVTSGIRIGTPAITTRGFNEAQAGALAGWICDVLDSRGDEAATAEVRSKVEAICKELPVYAKNQ.

(6S)-5,6,7,8-tetrahydrofolate is bound by residues Leu-120 and Gly-124–Leu-126. At Lys-229 the chain carries N6-(pyridoxal phosphate)lysine. Ser-353–Phe-355 contributes to the (6S)-5,6,7,8-tetrahydrofolate binding site.

This sequence belongs to the SHMT family. As to quaternary structure, homodimer. Requires pyridoxal 5'-phosphate as cofactor.

It is found in the cytoplasm. The catalysed reaction is (6R)-5,10-methylene-5,6,7,8-tetrahydrofolate + glycine + H2O = (6S)-5,6,7,8-tetrahydrofolate + L-serine. It functions in the pathway one-carbon metabolism; tetrahydrofolate interconversion. It participates in amino-acid biosynthesis; glycine biosynthesis; glycine from L-serine: step 1/1. Catalyzes the reversible interconversion of serine and glycine with tetrahydrofolate (THF) serving as the one-carbon carrier. This reaction serves as the major source of one-carbon groups required for the biosynthesis of purines, thymidylate, methionine, and other important biomolecules. Also exhibits THF-independent aldolase activity toward beta-hydroxyamino acids, producing glycine and aldehydes, via a retro-aldol mechanism. This is Serine hydroxymethyltransferase from Psychrobacter arcticus (strain DSM 17307 / VKM B-2377 / 273-4).